A 425-amino-acid chain; its full sequence is Aromatic prenyl transferase ptmE (425 aa).

L-tryptophan-binding positions include 83–84 (GI) and Glu-92. Substrate-binding residues include Arg-107, Lys-198, Tyr-200, Arg-265, Lys-267, Tyr-269, Tyr-345, Tyr-410, and Tyr-414.

It belongs to the tryptophan dimethylallyltransferase family. In terms of assembly, homodimer.

Its pathway is secondary metabolite biosynthesis. Aromatic prenyl transferase; part of the gene cluster that mediates the biosynthesis of the indole diterpenes penitrems. The geranylgeranyl diphosphate (GGPP) synthase ptmG catalyzes the first step in penitrem biosynthesis via conversion of farnesyl pyrophosphate and isopentyl pyrophosphate into geranylgeranyl pyrophosphate (GGPP). Condensation of indole-3-glycerol phosphate with GGPP by the prenyl transferase ptmC then forms 3-geranylgeranylindole (3-GGI). Epoxidation by the FAD-dependent monooxygenase ptmM leads to a epoxidized-GGI that is substrate of the terpene cyclase ptmB for cyclization to yield paspaline. Paspaline is subsequently converted to 13-desoxypaxilline by the cytochrome P450 monooxygenase ptmP, the latter being then converted to paxilline by the cytochrome P450 monooxygenase ptmQ. Paxilline is converted to beta-paxitriol via C-10 ketoreduction by the short-chain dehydrogenase ptmH which can be monoprenylated at the C-20 by the indole diterpene prenyltransferase ptmD. A two-step elimination (acetylation and elimination) process performed by the O-acetyltransferase ptmV and ptmI leads to the production of the prenylated form of penijanthine. The FAD-linked oxidoreductase ptmO then converts the prenylated form of penijanthine into PC-M5 which is in turn transformed into PC-M4 by the aromatic dimethylallyltransferase ptmE. Five sequential oxidative transformations performed by the cytochrome P450 monooxygenases ptmK, ptmU, ptmL, ptmN and ptmJ yield the various penitrem compounds. PtmK, ptmU and ptmM are involved in the formation of the key bicyclic ring of penitrem C via the formation of the intermediates secopenitrem D and penitrem D. PtmL catalyzes the epoxidation of penitrem D and C to yield penitrem B and F, respectively. PtmJ catalyzes the last benzylic hydroxylation to convert penitrem B to prenitrem E and penitrem F to penitrem A. The polypeptide is Aromatic prenyl transferase ptmE (Penicillium ochrochloron).